Reading from the N-terminus, the 113-residue chain is DNA-binding protein Mevan_1162 (113 aa).

The segment covering 1–12 (MDPEEIKQKKLQ) has biased composition (basic and acidic residues). The segment at 1 to 22 (MDPEEIKQKKLQEMQAKAQDPE) is disordered.

It belongs to the PDCD5 family.

This is DNA-binding protein Mevan_1162 from Methanococcus vannielii (strain ATCC 35089 / DSM 1224 / JCM 13029 / OCM 148 / SB).